Consider the following 235-residue polypeptide: NAD(P)H-hydrate epimerase (235 aa).

The YjeF N-terminal domain maps to 12–218 (AIVMDQLLMG…EFLKETNLTI (207 aa)). 62–66 (NNGGD) contributes to the (6S)-NADPHX binding site. 2 residues coordinate K(+): Asn63 and Asp127. (6S)-NADPHX-binding positions include 131–137 (GYSFKGD) and Asp161. Residue Ser164 coordinates K(+).

Belongs to the NnrE/AIBP family. Requires K(+) as cofactor.

The catalysed reaction is (6R)-NADHX = (6S)-NADHX. It carries out the reaction (6R)-NADPHX = (6S)-NADPHX. Catalyzes the epimerization of the S- and R-forms of NAD(P)HX, a damaged form of NAD(P)H that is a result of enzymatic or heat-dependent hydration. This is a prerequisite for the S-specific NAD(P)H-hydrate dehydratase to allow the repair of both epimers of NAD(P)HX. The polypeptide is NAD(P)H-hydrate epimerase (Dictyostelium discoideum (Social amoeba)).